A 421-amino-acid polypeptide reads, in one-letter code: Gamma-glutamyl phosphate reductase (421 aa).

Belongs to the gamma-glutamyl phosphate reductase family.

It is found in the cytoplasm. It catalyses the reaction L-glutamate 5-semialdehyde + phosphate + NADP(+) = L-glutamyl 5-phosphate + NADPH + H(+). The protein operates within amino-acid biosynthesis; L-proline biosynthesis; L-glutamate 5-semialdehyde from L-glutamate: step 2/2. Its function is as follows. Catalyzes the NADPH-dependent reduction of L-glutamate 5-phosphate into L-glutamate 5-semialdehyde and phosphate. The product spontaneously undergoes cyclization to form 1-pyrroline-5-carboxylate. The protein is Gamma-glutamyl phosphate reductase of Pseudomonas syringae pv. tomato (strain ATCC BAA-871 / DC3000).